The following is a 370-amino-acid chain: Protein PAM71, chloroplastic (370 aa).

Positions 1-38 (MLSLNLSESLRIPFQNPRPPKSDFSSTSSSPSSSSRRC) are disordered. Residues 1–73 (MLSLNLSESL…RNESQQLGFR (73 aa)) constitute a chloroplast transit peptide. Residues 22–38 (SDFSSTSSSPSSSSRRC) show a composition bias toward low complexity. Over 74-113 (CFQRNDAACYLEKAESEEHDRNLDVLVESSIAHSRREIQR) the chain is Stromal. Residues 114–134 (VLMFLAVSGSVALLGTDPAFA) form a helical membrane-spanning segment. Over 135–161 (ASSIPNVTQSLVTSFGDLGDISSGFAS) the chain is Lumenal, thylakoid. Residues 162–182 (AFLLIFFSELGDKTFFIAALL) form a helical membrane-spanning segment. Residues 183 to 188 (AARNSA) lie on the Stromal side of the membrane. Residues 189-209 (ATVFVGTFGALGIMTIISVVL) form a helical membrane-spanning segment. The Lumenal, thylakoid segment spans residues 210–228 (GRTFHYVDEVLPFRFGGTD). A helical transmembrane segment spans residues 229 to 249 (LPIDDIAAVCLLVYFGVSTLL). Topologically, residues 250–275 (DAVSDEGKADEEQKEAELAVSELSGN) are stromal. The helical transmembrane segment at 276 to 296 (GAGIVAAANTIISTFALVFVA) threads the bilayer. The Lumenal, thylakoid segment spans residues 297-315 (EWGDKSFFSTIALAAASSP). The helical transmembrane segment at 316–336 (LGVIAGALAGHGAATLLAVLG) threads the bilayer. At 337–348 (GSLLGNFLSEKA) the chain is on the stromal side. A helical transmembrane segment spans residues 349–369 (IAYVGGVLFLVFAAVTVAEIV). A topological domain (lumenal, thylakoid) is located at residue Thr-370.

The protein belongs to the GDT1 family. As to quaternary structure, homodimer.

Its subcellular location is the plastid. It localises to the chloroplast membrane. The protein resides in the thylakoid. Mn(2+)/H(+) exchanger, which transport Mn(2+)from the chloroplast stroma into the acidic thylakoid lumen. Might be a chloroplast-localized Ca(2+)/H(+) antiporter. Regulates Ca(2+), Mn(2+) and pH homeostasis. Required for chloroplast development. The chain is Protein PAM71, chloroplastic from Arabidopsis thaliana (Mouse-ear cress).